Consider the following 193-residue polypeptide: Molybdenum cofactor guanylyltransferase (193 aa).

Residues 8 to 10 (LAG), K21, D67, and D98 contribute to the GTP site. D98 provides a ligand contact to Mg(2+).

The protein belongs to the MobA family. Monomer. The cofactor is Mg(2+).

It localises to the cytoplasm. The enzyme catalyses Mo-molybdopterin + GTP + H(+) = Mo-molybdopterin guanine dinucleotide + diphosphate. In terms of biological role, transfers a GMP moiety from GTP to Mo-molybdopterin (Mo-MPT) cofactor (Moco or molybdenum cofactor) to form Mo-molybdopterin guanine dinucleotide (Mo-MGD) cofactor. The sequence is that of Molybdenum cofactor guanylyltransferase from Cereibacter sphaeroides (strain ATCC 17029 / ATH 2.4.9) (Rhodobacter sphaeroides).